A 988-amino-acid chain; its full sequence is Vacuolar sorting protein 18 (988 aa).

A CHCR repeat occupies 589-749; it reads NKNLNPRRLI…VVKQEKGAKR (161 aa). Residues 785-819 adopt a coiled-coil conformation; it reads KEAICSSLEDYNKQIEQLKEEMNDATRGADNIRND. The segment at 836 to 886 adopts an RING-type; degenerate zinc-finger fold; sequence CGVCKRKILMMSGDFRMAQGYSSAGPLAPFYVFPCGHSFHAQCLITHVTSC.

This sequence belongs to the VPS18 family. Core component of at least two putative endosomal tethering complexes, the homotypic fusion and vacuole protein sorting (HOPS) complex and the class C core vacuole/endosome tethering (CORVET) complex. Their common core is composed of the class C Vps proteins VPS11, VCL1, VPS18 and VPS33, which in HOPS further associates with VPS39 and VPS41 and in CORVET with VPS3.

It is found in the endosome membrane. The protein localises to the vacuole membrane. The protein resides in the cytoplasm. Essential protein required during embryogenesis. Believed to act as a core component of the putative HOPS endosomal tethering complex and of the class C core vacuole/endosome tethering (CORVET) complex. CORVET is required for vacuolar transport of SYP22. HOPS is required for the central vacuole formation. Involved in root development. Plays a role in vesicle-mediated protein trafficking to lysosomal compartments including the endocytic membrane transport pathways. This chain is Vacuolar sorting protein 18, found in Arabidopsis thaliana (Mouse-ear cress).